Here is a 1081-residue protein sequence, read N- to C-terminus: Cellulose synthase A catalytic subunit 1 [UDP-forming] (1081 aa).

Position 1 is an N-acetylmethionine (M1). Residues 1–270 are Cytoplasmic-facing; the sequence is MEASAGLVAG…SRVVPIPSSR (270 aa). Positions 39, 42, 58, 61, 66, 69, 81, and 84 each coordinate Zn(2+). Residues 39–85 form an RING-type; degenerate zinc finger; sequence CQICGDDVGLAETGDVFVACNECAFPVCRPCYEYERKDGTQCCPQCK. Residues 118 to 195 are disordered; sequence GANKARHQRH…RQPVPVRIVD (78 aa). Residues 127–139 show a composition bias toward basic and acidic residues; the sequence is HGEEFSSSSRHES. The segment covering 158-168 has biased composition (polar residues); that stretch reads PDTQSVRTTSG. Residues 271–291 traverse the membrane as a helical segment; that stretch reads LTPYRVVIILRLIILCFFLQY. Topologically, residues 292–299 are extracellular; it reads RTTHPVKN. A helical transmembrane segment spans residues 300–320; sequence AYPLWLTSVICEIWFAFSWLL. Residues 321-856 are Cytoplasmic-facing; that stretch reads DQFPKWYPIN…LLERIAYINT (536 aa). UDP-alpha-D-glucose-binding residues include S359, K365, E366, and D395. D395 is a catalytic residue. Residues 449–476 are a coiled coil; the sequence is VKERRAMKREYEEFKVRINALVAKAQKI. K536 contacts UDP-alpha-D-glucose. 2 residues coordinate Mn(2+): K537 and D561. D780 is an active-site residue. The helical transmembrane segment at 857–877 threads the bilayer; it reads IVYPITSIPLIAYCILPAFCL. Residues 878–889 are Extracellular-facing; that stretch reads ITDRFIIPEISN. A helical membrane pass occupies residues 890–910; the sequence is YASIWFILLFISIAVTGILEL. Residues 911–925 lie on the Cytoplasmic side of the membrane; it reads RWSGVSIEDWWRNEQ. A helical membrane pass occupies residues 926–946; sequence FWVIGGTSAHLFAVFQGLLKV. The Extracellular segment spans residues 947–976; it reads LAGIDTNFTVTSKATDEDGDFAELYIFKWT. N-linked (GlcNAc...) asparagine glycosylation is present at N953. The chain crosses the membrane as a helical span at residues 977–997; the sequence is ALLIPPTTVLLVNLIGIVAGV. The Cytoplasmic portion of the chain corresponds to 998 to 1008; that stretch reads SYAVNSGYQSW. The helical transmembrane segment at 1009–1029 threads the bilayer; it reads GPLFGKLFFALWVIAHLYPFL. Residues 1030–1038 are Extracellular-facing; that stretch reads KGLLGRQNR. Residues 1039-1059 form a helical membrane-spanning segment; it reads TPTIVIVWSVLLASIFSLLWV. Residues 1060–1081 lie on the Cytoplasmic side of the membrane; it reads RINPFVDANPNANNFNGKGGVF.

This sequence belongs to the glycosyltransferase 2 family. Plant cellulose synthase subfamily. Interacts with CESA3 and CESA6. Assembly with CESA3 and CESA6 is required for functional complex in primary cell wall cellulose synthesis. Interacts with STL1 and STL2, but not with GOT1. Binds to CSI1. Interacts with PAT24/TIP1. Zn(2+) serves as cofactor. It depends on Mn(2+) as a cofactor. In terms of processing, S-acylated. Expressed in germinating seeds, seedlings, roots, stems, shoots leaves and flowers, but not in mature flowers.

The protein localises to the cell membrane. The enzyme catalyses [(1-&gt;4)-beta-D-glucosyl](n) + UDP-alpha-D-glucose = [(1-&gt;4)-beta-D-glucosyl](n+1) + UDP + H(+). Its pathway is glycan metabolism; plant cellulose biosynthesis. Catalytic subunit of cellulose synthase terminal complexes ('rosettes'), required for beta-1,4-glucan microfibril crystallization, a major mechanism of the cell wall formation. Involved in the primary cell wall formation. Required during embryogenesis for cell elongation, orientation of cell expansion and complex cell wall formations, such as interdigitated pattern of epidermal pavement cells, stomatal guard cells and trichomes. Plays a role in lateral roots formation, but seems not necessary for the development of tip-growing cells such as root hairs. The presence of each protein CESA1 and CESA6 is critical for cell expansion after germination. The sequence is that of Cellulose synthase A catalytic subunit 1 [UDP-forming] from Arabidopsis thaliana (Mouse-ear cress).